The chain runs to 381 residues: Alpha-methylacyl-CoA racemase (381 aa).

Residues Arg36 and 54 to 57 contribute to the substrate site; that span reads LDLK. Lys57 bears the N6-acetyllysine mark. 2 positions are modified to N6-acetyllysine; alternate: Lys86 and Lys100. Residues Lys86 and Lys100 each carry the N6-succinyllysine; alternate modification. An N6-acetyllysine modification is found at Lys117. Residue 120 to 125 participates in substrate binding; that stretch reads GHDINY. The Proton acceptor role is filled by His121. Asp151 acts as the Proton donor in catalysis. Lys267 is modified (N6-succinyllysine). The interval 316 to 344 is disordered; that stretch reads TDGEQLPSPRPAPLLSRTPAVPSAKRDPS. Residues 379–381 carry the Microbody targeting signal motif; the sequence is ANL.

It belongs to the CoA-transferase III family. As to quaternary structure, monomer.

It localises to the peroxisome. It is found in the mitochondrion. It catalyses the reaction a (2S)-2-methylacyl-CoA = a (2R)-2-methylacyl-CoA. It carries out the reaction (25R)-3alpha,7alpha,12alpha-trihydroxy-5beta-cholestan-26-oyl-CoA = (25S)-3alpha,7alpha,12alpha-trihydroxy-5beta-cholestan-26-oyl-CoA. The enzyme catalyses (2R,6)-dimethylheptanoyl-CoA = (2S,6)-dimethylheptanoyl-CoA. The protein operates within lipid metabolism; bile acid biosynthesis. It participates in lipid metabolism; fatty acid metabolism. Its function is as follows. Catalyzes the interconversion of (R)- and (S)-stereoisomers of alpha-methyl-branched-chain fatty acyl-CoA esters. Acts only on coenzyme A thioesters, not on free fatty acids, and accepts as substrates a wide range of alpha-methylacyl-CoAs, including pristanoyl-CoA, trihydroxycoprostanoyl-CoA (an intermediate in bile acid synthesis), and arylpropionic acids like the anti-inflammatory drug ibuprofen (2-(4-isobutylphenyl)propionic acid) but neither 3-methyl-branched nor linear-chain acyl-CoAs. The chain is Alpha-methylacyl-CoA racemase (Amacr) from Mus musculus (Mouse).